Here is an 860-residue protein sequence, read N- to C-terminus: DNA primase (860 aa).

The segment at 804–842 adopts a CHC2-type zinc-finger fold; the sequence is CLNRQHRGNRDNVLVYIQLKADGNRLILILWSTCFATKC.

Belongs to the herpesviridae DNA primase family. As to quaternary structure, associates with the helicase and the primase-associated factor to form the helicase-primase factor.

The protein resides in the host nucleus. Functionally, essential component of the helicase/primase complex. Unwinds the DNA at the replication forks and generates single-stranded DNA for both leading and lagging strand synthesis. The primase initiates primer synthesis and thereby produces large amount of short RNA primers on the lagging strand that the polymerase elongates using dNTPs. The chain is DNA primase (U43) from Homo sapiens (Human).